Consider the following 291-residue polypeptide: ATP synthase gamma chain (291 aa).

The protein belongs to the ATPase gamma chain family. In terms of assembly, F-type ATPases have 2 components, CF(1) - the catalytic core - and CF(0) - the membrane proton channel. CF(1) has five subunits: alpha(3), beta(3), gamma(1), delta(1), epsilon(1). CF(0) has three main subunits: a, b and c.

It is found in the cell inner membrane. In terms of biological role, produces ATP from ADP in the presence of a proton gradient across the membrane. The gamma chain is believed to be important in regulating ATPase activity and the flow of protons through the CF(0) complex. The sequence is that of ATP synthase gamma chain from Roseobacter denitrificans (strain ATCC 33942 / OCh 114) (Erythrobacter sp. (strain OCh 114)).